Here is a 118-residue protein sequence, read N- to C-terminus: Small ribosomal subunit protein uS13 (118 aa).

Residues 92–118 (RRNLPVRGQNTKNNARTRKGPTRPLKR) are disordered. A compositionally biased stretch (basic residues) spans 106–118 (ARTRKGPTRPLKR).

Belongs to the universal ribosomal protein uS13 family. In terms of assembly, part of the 30S ribosomal subunit. Forms a loose heterodimer with protein S19. Forms two bridges to the 50S subunit in the 70S ribosome.

Located at the top of the head of the 30S subunit, it contacts several helices of the 16S rRNA. In the 70S ribosome it contacts the 23S rRNA (bridge B1a) and protein L5 of the 50S subunit (bridge B1b), connecting the 2 subunits; these bridges are implicated in subunit movement. Contacts the tRNAs in the A and P-sites. The protein is Small ribosomal subunit protein uS13 of Psychrobacter arcticus (strain DSM 17307 / VKM B-2377 / 273-4).